The primary structure comprises 227 residues: PKHD-type hydroxylase Swit_4046 (227 aa).

The region spanning 78 to 178 (KVFPPLFNLY…RLCSFFWIQS (101 aa)) is the Fe2OG dioxygenase domain. The Fe cation site is built by His-96, Asp-98, and His-159. Arg-169 is a binding site for 2-oxoglutarate.

It depends on Fe(2+) as a cofactor. L-ascorbate serves as cofactor.

The chain is PKHD-type hydroxylase Swit_4046 from Rhizorhabdus wittichii (strain DSM 6014 / CCUG 31198 / JCM 15750 / NBRC 105917 / EY 4224 / RW1) (Sphingomonas wittichii).